The following is a 576-amino-acid chain: Arginine--tRNA ligase (576 aa).

Positions 121–131 (PNLAKEMHVGH) match the 'HIGH' region motif.

Belongs to the class-I aminoacyl-tRNA synthetase family. Monomer.

It localises to the cytoplasm. It catalyses the reaction tRNA(Arg) + L-arginine + ATP = L-arginyl-tRNA(Arg) + AMP + diphosphate. This is Arginine--tRNA ligase from Alteromonas mediterranea (strain DSM 17117 / CIP 110805 / LMG 28347 / Deep ecotype).